The primary structure comprises 322 residues: Tubulin alpha-4 chain (322 aa).

6 residues coordinate GTP: Ser15, Gly19, Thr20, Thr54, Asn81, and Asn103. Glu129 is an active-site residue.

It belongs to the tubulin family. In terms of assembly, dimer of alpha and beta chains. A typical microtubule is a hollow water-filled tube with an outer diameter of 25 nm and an inner diameter of 15 nM. Alpha-beta heterodimers associate head-to-tail to form protofilaments running lengthwise along the microtubule wall with the beta-tubulin subunit facing the microtubule plus end conferring a structural polarity. Microtubules usually have 13 protofilaments but different protofilament numbers can be found in some organisms and specialized cells. Mg(2+) serves as cofactor. Post-translationally, some glutamate residues at the C-terminus are polyglycylated, resulting in polyglycine chains on the gamma-carboxyl group. Glycylation is mainly limited to tubulin incorporated into axonemes (cilia and flagella) whereas glutamylation is prevalent in neuronal cells, centrioles, axonemes, and the mitotic spindle. Both modifications can coexist on the same protein on adjacent residues, and lowering polyglycylation levels increases polyglutamylation, and reciprocally. The precise function of polyglycylation is still unclear. In terms of processing, some glutamate residues at the C-terminus are polyglutamylated, resulting in polyglutamate chains on the gamma-carboxyl group. Polyglutamylation plays a key role in microtubule severing by spastin (SPAST). SPAST preferentially recognizes and acts on microtubules decorated with short polyglutamate tails: severing activity by SPAST increases as the number of glutamates per tubulin rises from one to eight, but decreases beyond this glutamylation threshold.

The protein resides in the cytoplasm. The protein localises to the cytoskeleton. It carries out the reaction GTP + H2O = GDP + phosphate + H(+). Its function is as follows. Tubulin is the major constituent of microtubules, a cylinder consisting of laterally associated linear protofilaments composed of alpha- and beta-tubulin heterodimers. Microtubules grow by the addition of GTP-tubulin dimers to the microtubule end, where a stabilizing cap forms. Below the cap, tubulin dimers are in GDP-bound state, owing to GTPase activity of alpha-tubulin. This is Tubulin alpha-4 chain from Gallus gallus (Chicken).